We begin with the raw amino-acid sequence, 533 residues long: Lymphocyte cytosolic protein 2 (533 aa).

The region spanning 15-81 (WDPDSLADYF…INKNEERRSI (67 aa)) is the SAM domain. Y23 is modified (phosphotyrosine). The segment at 78–417 (RRSIFTRKPQ…PPSPAEEENS (340 aa)) is disordered. Positions 108-155 (FEEDDYESPNDDQDGEDDGDYESPNEEEEAPVEDDADYEPPPSNDEEA) are enriched in acidic residues. A compositionally biased stretch (pro residues) spans 184–213 (QQPPVPPQRPMAALPPPPAGRNHSPLPPPQ). S207 carries the phosphoserine modification. Polar residues-rich tracts occupy residues 337 to 350 (MSSN…TKPS) and 365 to 376 (SESNSSFPQSAS). S376 and S410 each carry phosphoserine. Pro residues predominate over residues 400 to 411 (LPLPNKPRPPSP). The 109-residue stretch at 422-530 (WYVSYITRPE…RYQCTLTHAA (109 aa)) folds into the SH2 domain.

Interacts with SLA. Interacts with CBLB. Interacts with GRB2. Interacts with SHB. Interacts with PRAM1. Interacts (via SH2 domain) with CD6 (via tyrosine phosphorylated C-terminus). Interacts with FYB1 and the phosphorylated form of FYB2. Interacts with 14-3-3 adapter/YWHAZ; this phosphorylation leads to YWHAZ proteolytic degradation. Interacts with VAV1; this interaction plays a role in TCR-mediated cytokine production. Interacts with AGER; this interaction plays an important role in AGER-mediated pro-inflammatory responses and cytokine release. Phosphorylated after T-cell receptor activation by ZAP70, ITK and TXK, which leads to the up-regulation of Th1 preferred cytokine IL-2. SYK-dependent phosphorylation is required for recruitment of PI3K signaling components. In terms of tissue distribution, highly expressed in spleen, thymus and peripheral blood leukocytes. Highly expressed also in T-cell and monocytic cell lines, expressed at lower level in B-cell lines. Not detected in fibroblast or neuroblastoma cell lines.

Its subcellular location is the cytoplasm. Adapter protein primarily involved in signaling pathways within T-cells, as well as other immune cells such as platelets, mast cells, and natural killer (NK) cells. Plays a crucial role for transducing signal from the T-cell receptor (TCR) after antigen recognition leading to T-cell activation. Mechanistically, once phosphorylated by the kinase ZAP70, mediates interactions with the guanine-nucleotide exchange factor VAV1, the adapter protein NCK and the kinase ITK. In turn, stimulates the activation of PKC-theta/PRKCQ and NF-kappa-B transcriptional activity in response to CD3 and CD28 costimulation. Also plays an essential role in AGER-induced signaling pathways including p38 MAPK and ERK1/2 activation leading to cytokine release and pro-inflammatory responses. This chain is Lymphocyte cytosolic protein 2 (LCP2), found in Homo sapiens (Human).